An 84-amino-acid polypeptide reads, in one-letter code: Large ribosomal subunit protein bL27 (84 aa).

The protein belongs to the bacterial ribosomal protein bL27 family.

The polypeptide is Large ribosomal subunit protein bL27 (Kocuria rhizophila (strain ATCC 9341 / DSM 348 / NBRC 103217 / DC2201)).